The chain runs to 465 residues: Uronate isomerase (465 aa).

Belongs to the metallo-dependent hydrolases superfamily. Uronate isomerase family.

The enzyme catalyses D-glucuronate = D-fructuronate. It catalyses the reaction aldehydo-D-galacturonate = keto-D-tagaturonate. Its pathway is carbohydrate metabolism; pentose and glucuronate interconversion. This Streptococcus equi subsp. zooepidemicus (strain MGCS10565) protein is Uronate isomerase.